A 343-amino-acid chain; its full sequence is Small ribosomal subunit biogenesis GTPase RsgA (343 aa).

The 160-residue stretch at 116–275 (RGQLKPVAAN…LIDSPGIREF (160 aa)) folds into the CP-type G domain. GTP is bound by residues 163 to 166 (NKAD) and 217 to 225 (GQSGVGKSS). Residues cysteine 299, cysteine 304, histidine 306, and cysteine 312 each contribute to the Zn(2+) site.

The protein belongs to the TRAFAC class YlqF/YawG GTPase family. RsgA subfamily. Monomer. Associates with 30S ribosomal subunit, binds 16S rRNA. The cofactor is Zn(2+).

The protein localises to the cytoplasm. Functionally, one of several proteins that assist in the late maturation steps of the functional core of the 30S ribosomal subunit. Helps release RbfA from mature subunits. May play a role in the assembly of ribosomal proteins into the subunit. Circularly permuted GTPase that catalyzes slow GTP hydrolysis, GTPase activity is stimulated by the 30S ribosomal subunit. The sequence is that of Small ribosomal subunit biogenesis GTPase RsgA from Pseudomonas syringae pv. syringae (strain B728a).